The primary structure comprises 539 residues: Phosphoenolpyruvate carboxykinase (ATP) (539 aa).

Residues R64, Y206, and K212 each contribute to the substrate site. Residues K212, H231, and 247 to 255 (GLSGTGKTT) each bind ATP. Residues K212 and H231 each contribute to the Mn(2+) site. D268 serves as a coordination point for Mn(2+). Residues E296, R332, 448–449 (RI), and T454 each bind ATP. R332 is a binding site for substrate.

This sequence belongs to the phosphoenolpyruvate carboxykinase (ATP) family. Monomer. Requires Mn(2+) as cofactor.

The protein resides in the cytoplasm. It carries out the reaction oxaloacetate + ATP = phosphoenolpyruvate + ADP + CO2. Its pathway is carbohydrate biosynthesis; gluconeogenesis. Involved in the gluconeogenesis. Catalyzes the conversion of oxaloacetate (OAA) to phosphoenolpyruvate (PEP) through direct phosphoryl transfer between the nucleoside triphosphate and OAA. The sequence is that of Phosphoenolpyruvate carboxykinase (ATP) from Salmonella choleraesuis (strain SC-B67).